The primary structure comprises 174 residues: Endoribonuclease YbeY (174 aa).

Residues histidine 124, histidine 128, and histidine 134 each contribute to the Zn(2+) site.

The protein belongs to the endoribonuclease YbeY family. Zn(2+) is required as a cofactor.

The protein resides in the cytoplasm. Single strand-specific metallo-endoribonuclease involved in late-stage 70S ribosome quality control and in maturation of the 3' terminus of the 16S rRNA. The polypeptide is Endoribonuclease YbeY (Synechococcus elongatus (strain ATCC 33912 / PCC 7942 / FACHB-805) (Anacystis nidulans R2)).